Consider the following 233-residue polypeptide: MGRLFVKICGITRQDQAEAIAALGVSALGFIAVPNTPRYLPLSEMARWVGSLPGPVEKVGVFLDQDPRAIAAWVETVGLTAVQLHGQESPQDCQQLGEWLPGIRRIKALRVRQPQDLEVANLYRDCVEMLLLDAYHPQQAGGTGRTLNWPELARLSRERALPLPWLLAGGLNPDNVLQALSHLQPSGIDLSSGVERRPGDKDIDKVRHLLQQLGSQGWEIAPTLPPITPSATG.

It belongs to the TrpF family.

The catalysed reaction is N-(5-phospho-beta-D-ribosyl)anthranilate = 1-(2-carboxyphenylamino)-1-deoxy-D-ribulose 5-phosphate. The protein operates within amino-acid biosynthesis; L-tryptophan biosynthesis; L-tryptophan from chorismate: step 3/5. The sequence is that of N-(5'-phosphoribosyl)anthranilate isomerase from Synechococcus sp. (strain JA-2-3B'a(2-13)) (Cyanobacteria bacterium Yellowstone B-Prime).